We begin with the raw amino-acid sequence, 379 residues long: Pathogen-associated molecular patterns-induced protein A70 (379 aa).

Residues 7–29 (VASFFTPTTLFLLLNLMIGTIVV) traverse the membrane as a helical segment. N-linked (GlcNAc...) asparagine glycosylation is present at Asn122. Positions 133–154 (TGSDPHSHSHSHLDLHPDPAPA) are disordered. Residues 137–149 (PHSHSHSHLDLHP) show a composition bias toward basic and acidic residues. The N-linked (GlcNAc...) asparagine glycan is linked to Asn170. Disordered stretches follow at residues 216–238 (PEEDQPTGTGVNSQINPPGLTRA) and 256–347 (SDPD…DGVD). The segment covering 221–231 (PTGTGVNSQIN) has biased composition (polar residues). Basic and acidic residues-rich tracts occupy residues 256-285 (SDPDLDQKQNPDPVLHEEHKHVRSKSESKK) and 322-335 (SLERRRPDTTRVER).

Its subcellular location is the membrane. The sequence is that of Pathogen-associated molecular patterns-induced protein A70 from Arabidopsis thaliana (Mouse-ear cress).